The following is a 749-amino-acid chain: Pectate disaccharide-lyase (749 aa).

A signal peptide spans 1 to 26; that stretch reads MKYAASGLLSVALNSLLLLGSNQRFA. The Ca(2+) site is built by Asp538, Asp562, Asp563, and Asp566. Residue Lys595 is the Proton acceptor of the active site.

Belongs to the polysaccharide lyase 9 family. Ca(2+) serves as cofactor.

It is found in the secreted. The enzyme catalyses [(1-&gt;4)-alpha-D-galacturonosyl](n) = 4-(4-deoxy-alpha-D-galact-4-enuronosyl)-D-galacturonate + [(1-&gt;4)-alpha-D-galacturonosyl](n-2). With respect to regulation, activity on pectate is nearly completely inhibited by ethyleneglycol-bis-(P-aminoethyl ether) N,N'-tetraacetic acid (EGTA), EDTA or nitrilotriacetic acid. Activity is specifically restored by the addition of Ca(2+). Exo-cleaving lyase that catalyzes the digestion of pectate. Contributes to pectate catabolism but not to bacterial virulence. In vitro can also use citrus pectin and highly methyl-esterified Link pectin as substrates. This chain is Pectate disaccharide-lyase, found in Dickeya chrysanthemi (Pectobacterium chrysanthemi).